Consider the following 504-residue polypeptide: Lysine--tRNA ligase (504 aa).

Residues glutamate 411 and glutamate 418 each coordinate Mg(2+).

Belongs to the class-II aminoacyl-tRNA synthetase family. Homodimer. Requires Mg(2+) as cofactor.

It is found in the cytoplasm. It carries out the reaction tRNA(Lys) + L-lysine + ATP = L-lysyl-tRNA(Lys) + AMP + diphosphate. The sequence is that of Lysine--tRNA ligase from Clostridium botulinum (strain ATCC 19397 / Type A).